A 528-amino-acid polypeptide reads, in one-letter code: GMP synthase [glutamine-hydrolyzing] (528 aa).

Positions 22–212 constitute a Glutamine amidotransferase type-1 domain; sequence AILVLDFGSQ…VFKICQSQTN (191 aa). Catalysis depends on Cys-99, which acts as the Nucleophile. Active-site residues include His-186 and Glu-188. The GMPS ATP-PPase domain occupies 213–403; that stretch reads WSLESNVETI…LGIKKEALYR (191 aa). 240-246 provides a ligand contact to ATP; that stretch reads SGGTDSL.

In terms of assembly, homodimer.

The catalysed reaction is XMP + L-glutamine + ATP + H2O = GMP + L-glutamate + AMP + diphosphate + 2 H(+). It participates in purine metabolism; GMP biosynthesis; GMP from XMP (L-Gln route): step 1/1. In terms of biological role, catalyzes the synthesis of GMP from XMP. The protein is GMP synthase [glutamine-hydrolyzing] of Borrelia garinii subsp. bavariensis (strain ATCC BAA-2496 / DSM 23469 / PBi) (Borreliella bavariensis).